The primary structure comprises 494 residues: Ubiquitin carboxyl-terminal hydrolase 14 (494 aa).

The Ubiquitin-like domain occupies 4-80; it reads YSVTVKWGKE…MMGSADALPE (77 aa). Position 52 is a phosphothreonine (T52). The USP domain maps to 105–483; that stretch reads CGLTNLGNTC…IAYVLLYGPR (379 aa). C114 serves as the catalytic Nucleophile. A phosphoserine mark is found at S143 and S148. Phosphothreonine is present on T235. Phosphoserine is present on residues S237, S302, and S432. H435 serves as the catalytic Proton acceptor. Residue K449 is modified to N6-acetyllysine.

Belongs to the peptidase C19 family. USP14/UBP6 subfamily. In terms of assembly, homodimer (Potential). Associates with the 26S proteasome. Interacts with FANCC, CXCR4 and ERN1. Interacts with TRIM14; this interaction recruits USP14 to cleave ubiquitin chains of CGAS and KDM4D.

The protein localises to the cytoplasm. It is found in the cell membrane. It catalyses the reaction Thiol-dependent hydrolysis of ester, thioester, amide, peptide and isopeptide bonds formed by the C-terminal Gly of ubiquitin (a 76-residue protein attached to proteins as an intracellular targeting signal).. Functionally, proteasome-associated deubiquitinase which releases ubiquitin from the proteasome targeted ubiquitinated proteins. Ensures the regeneration of ubiquitin at the proteasome. Is a reversibly associated subunit of the proteasome and a large fraction of proteasome-free protein exists within the cell. Required for the degradation of the chemokine receptor CXCR4 which is critical for CXCL12-induced cell chemotaxis. Also serves as a physiological inhibitor of endoplasmic reticulum-associated degradation (ERAD) under the non-stressed condition by inhibiting the degradation of unfolded endoplasmic reticulum proteins via interaction with ERN1. Indispensable for synaptic development and function at neuromuscular junctions (NMJs). Plays a role in the innate immune defense against viruses by stabilizing the viral DNA sensor CGAS and thus inhibiting its autophagic degradation. Inhibits OPTN-mediated selective autophagic degradation of KDM4D and thereby negatively regulates H3K9me2 and H3K9me3. This chain is Ubiquitin carboxyl-terminal hydrolase 14 (USP14), found in Homo sapiens (Human).